The sequence spans 544 residues: MAKDIKFSEEARRSMLRGVDTLANAVKVTLGPKGRNVVLEKKFGSPLITNDGVTIAKEIELEDAFENMGAKLVAEVASKTNDVAGDGTTTATVLAQAMIREGLKNVTAGANPMGLRKGIEKAVVAAVEELKTISKPIEGKSSIAQVAAISAADEEVGQLIAEAMERVGNDGVITLEESKGFTTELDVVEGMQFDRGYASPYMITDSDKMEAVLDNPYILITDKKISNIQEILPVLEQVVQQGKPLLIIAEDVEGEALATLVVNKLRGTFNVVAVKAPGFGDRRKAMLEDIAILTGGEVITEELGRDLKSATVESLGRAGKVVVTKENTTVVEGVGSTEQIEARIGQIRAQLEETTSEFDREKLQERLAKLVGGVAVIKVGAATETELKERKLRIEDALNSTRAAVEEGIVAGGGTSLMNVYTKVASIVAEGDEATGINIVLRALEEPVRQIAINAGLEGSVVVERLKGEKVGVGFNAATGEWVNMLETGIVDPAKVTRSALQNAASVAAMFLTTEAVVADKPEPNAPAMPDMGGMGMGGMGGMM.

Residues 29 to 32 (TLGP), 86 to 90 (DGTTT), Gly413, 476 to 478 (NAA), and Asp492 contribute to the ATP site.

Belongs to the chaperonin (HSP60) family. In terms of assembly, forms a cylinder of 14 subunits composed of two heptameric rings stacked back-to-back. Interacts with the co-chaperonin GroES.

It is found in the cytoplasm. It catalyses the reaction ATP + H2O + a folded polypeptide = ADP + phosphate + an unfolded polypeptide.. Functionally, together with its co-chaperonin GroES, plays an essential role in assisting protein folding. The GroEL-GroES system forms a nano-cage that allows encapsulation of the non-native substrate proteins and provides a physical environment optimized to promote and accelerate protein folding. In Bacillus anthracis (strain A0248), this protein is Chaperonin GroEL.